Here is a 205-residue protein sequence, read N- to C-terminus: Ras-related protein rab-6.2 (205 aa).

GTP contacts are provided by residues 18-25, Thr42, 66-70, and 124-127; these read EQSVGKTS, TAGQE, and KTDL. S-geranylgeranyl cysteine attachment occurs at residues Cys203 and Cys205. Cys205 carries the cysteine methyl ester modification.

It belongs to the small GTPase superfamily. Rab family. As to quaternary structure, interacts with GARP complex component vps-52. Interacts (in GTP-bound form) with lin-10. May interact (in GTP-bound form) with eat-17. Highly expressed in body wall muscles, pharyngeal and vulval muscles, hypodermis, intestine, the gonad, coelomocytes, and neurons, including command interneuron (at protein level). Highly expressed in the terminal bulb muscles.

The protein localises to the perikaryon. It localises to the cell projection. It is found in the dendrite. The protein resides in the golgi apparatus. Its subcellular location is the cytoplasmic vesicle. The small GTPases Rab are key regulators of intracellular membrane trafficking, from the formation of transport vesicles to their fusion with membranes. Rabs cycle between an inactive GDP-bound form and an active GTP-bound form that is able to recruit to membranes different set of downstream effectors directly responsible for vesicle formation, movement, tethering and fusion. In its active GTP-bound form, acts redundantly with rab-6.1 (in its active GTP-bound form) to positively regulate the retrograde trafficking of cargo molecules from endosomes to the Golgi compartment. Required for the retrograde trafficking of glr-1, a subunit of AMPA-type glutamate receptors (AMPRs), out of early endosomes and into the Golgi compartment in neurons. Its role in glr-1 trafficking may partly be mediated by its interaction with lin-10 and association with components of the retromer complex such as rme-8. Together with rab-6.2, promotes the retrograde trafficking of mig-14 from endosomes to Golgi structures in the intestine. Plays a role in the epidermis to promote cuticle integrity and impermeability of the cuticle barrier to exogenous molecules. May have a role in the glycosylation of the cuticular surface. Required for seam cell division and alae formation. Required for grinder formation, which is the feeding organ that breaks down food. In contrast to rab-6.1, may play a minor role in the exocytosis of secretory vesicles (cortical granules) during the oocyte-to-embryo transition. The polypeptide is Ras-related protein rab-6.2 (Caenorhabditis elegans).